The sequence spans 380 residues: 4-hydroxy-3-methylbut-2-en-1-yl diphosphate synthase (flavodoxin) (380 aa).

Residues Cys-273, Cys-276, Cys-308, and Glu-315 each contribute to the [4Fe-4S] cluster site.

It belongs to the IspG family. [4Fe-4S] cluster serves as cofactor.

The catalysed reaction is (2E)-4-hydroxy-3-methylbut-2-enyl diphosphate + oxidized [flavodoxin] + H2O + 2 H(+) = 2-C-methyl-D-erythritol 2,4-cyclic diphosphate + reduced [flavodoxin]. Its pathway is isoprenoid biosynthesis; isopentenyl diphosphate biosynthesis via DXP pathway; isopentenyl diphosphate from 1-deoxy-D-xylulose 5-phosphate: step 5/6. Functionally, converts 2C-methyl-D-erythritol 2,4-cyclodiphosphate (ME-2,4cPP) into 1-hydroxy-2-methyl-2-(E)-butenyl 4-diphosphate. This Leifsonia xyli subsp. xyli (strain CTCB07) protein is 4-hydroxy-3-methylbut-2-en-1-yl diphosphate synthase (flavodoxin).